The primary structure comprises 213 residues: Heat shock protein 27 (213 aa).

Phosphoserine is present on residues Ser58 and Ser75. A sHSP domain is found at 71–182 (SRRASGGPNA…SERIVQIQQT (112 aa)). The segment at 157–213 (VLTLKAPPPPSKEQAKSERIVQIQQTGPAHLSVKAPAPEAGDGKAENGSGEKMETSK) is disordered. Residues 197–213 (GDGKAENGSGEKMETSK) show a composition bias toward basic and acidic residues.

This sequence belongs to the small heat shock protein (HSP20) family.

This is Heat shock protein 27 (Hsp27) from Drosophila melanogaster (Fruit fly).